Reading from the N-terminus, the 114-residue chain is Type 4 adapter protein IcmS (114 aa).

As to quaternary structure, the T4BSS is a complex nanomachine composed of several subcomplexes. This subunit is part of the Type IV Coupling Complex (T4CC), a subcomplex composed of the DotLMNYZ core and the IcmSW-LvgA adapter subunits, linked by the C-terminal tail of DotL. Interacts with IcmW. IcmS and IcmW form a stable complex. Interacts directly with the type 4 coupling protein DotL. Interacts with LvgA. Interacts with effector proteins.

It is found in the cytoplasm. With respect to regulation, interaction with DotL is critical for the export of IcmSW-dependent substrates. Functionally, component of the Dot/Icm type IVB secretion system (T4BSS), which is used to inject bacterial effector proteins into eukaryotic host cells. Part of a subcomplex which recruits effector proteins and delivers them to the core transmembrane subcomplex. The IcmS/IcmW protein complex plays an important role in protein translocation by interacting with multiple Dot/Icm effector proteins to facilitate their translocation into host cells. Interaction promotes conformational changes in the effector protein, which may facilitate display of a C-terminal translocation signal. May maintain the substrates in a translocation competent form. Required for intracellular growth in host cells, replicative phagosome formation and phagosome trafficking. IcmS is required for IcmW stability. The sequence is that of Type 4 adapter protein IcmS from Legionella pneumophila subsp. pneumophila (strain Philadelphia 1 / ATCC 33152 / DSM 7513).